The primary structure comprises 548 residues: Rhodopsin kinase grk7-b (548 aa).

Residue S33 is modified to Phosphoserine; by PKA. In terms of domain architecture, RGS spans F53 to V172. The 260-residue stretch at F187 to F446 folds into the Protein kinase domain. ATP is bound by residues L193–V201 and K216. D312 serves as the catalytic Proton acceptor. The region spanning K447–E512 is the AGC-kinase C-terminal domain. Positions D520–L548 are disordered. C545 carries the post-translational modification Cysteine methyl ester. The S-geranylgeranyl cysteine moiety is linked to residue C545. Positions T546–L548 are cleaved as a propeptide — removed in mature form.

Belongs to the protein kinase superfamily. AGC Ser/Thr protein kinase family. GPRK subfamily. Phosphorylation at Ser-33 is regulated by light and activated by cAMP. As to expression, expressed in the eyes (at protein level). Expressed in the eyes, the pineal gland and in the brain.

It is found in the membrane. It catalyses the reaction L-threonyl-[rhodopsin] + ATP = O-phospho-L-threonyl-[rhodopsin] + ADP + H(+). It carries out the reaction L-seryl-[rhodopsin] + ATP = O-phospho-L-seryl-[rhodopsin] + ADP + H(+). In terms of biological role, retina-specific kinase involved in the shutoff of the photoresponse and adaptation to changing light conditions via cone opsin phosphorylation, including rhodopsin (RHO). In Danio rerio (Zebrafish), this protein is Rhodopsin kinase grk7-b (grk7b).